The primary structure comprises 256 residues: Thiazole synthase (256 aa).

Lys-95 (schiff-base intermediate with DXP) is an active-site residue. Residues Gly-156, 182 to 183, and 204 to 205 contribute to the 1-deoxy-D-xylulose 5-phosphate site; these read AG and NT.

The protein belongs to the ThiG family. Homotetramer. Forms heterodimers with either ThiH or ThiS.

The protein resides in the cytoplasm. The catalysed reaction is [ThiS sulfur-carrier protein]-C-terminal-Gly-aminoethanethioate + 2-iminoacetate + 1-deoxy-D-xylulose 5-phosphate = [ThiS sulfur-carrier protein]-C-terminal Gly-Gly + 2-[(2R,5Z)-2-carboxy-4-methylthiazol-5(2H)-ylidene]ethyl phosphate + 2 H2O + H(+). The protein operates within cofactor biosynthesis; thiamine diphosphate biosynthesis. Its function is as follows. Catalyzes the rearrangement of 1-deoxy-D-xylulose 5-phosphate (DXP) to produce the thiazole phosphate moiety of thiamine. Sulfur is provided by the thiocarboxylate moiety of the carrier protein ThiS. In vitro, sulfur can be provided by H(2)S. In Escherichia coli O17:K52:H18 (strain UMN026 / ExPEC), this protein is Thiazole synthase.